Consider the following 200-residue polypeptide: Sperm acrosome developmental regulator (200 aa).

The residue at position 63 (serine 63) is a Phosphoserine. A compositionally biased stretch (basic residues) spans 167–183 (QERRRRRRMRSHASHTS). A disordered region spans residues 167–200 (QERRRRRRMRSHASHTSRHSESVQGLKHDARSPL). Over residues 184 to 200 (RHSESVQGLKHDARSPL) the composition is skewed to basic and acidic residues.

The protein resides in the cytoplasmic vesicle. It is found in the secretory vesicle. Its subcellular location is the acrosome. Functionally, may play an important role in acrosome formation and nucleus shaping during spermiogenesis. The protein is Sperm acrosome developmental regulator (Spacdr) of Rattus norvegicus (Rat).